The primary structure comprises 283 residues: Bifunctional protein FolD (283 aa).

NADP(+) is bound by residues Gly165–Gly167, Thr192, and Val233.

The protein belongs to the tetrahydrofolate dehydrogenase/cyclohydrolase family. In terms of assembly, homodimer.

It carries out the reaction (6R)-5,10-methylene-5,6,7,8-tetrahydrofolate + NADP(+) = (6R)-5,10-methenyltetrahydrofolate + NADPH. The enzyme catalyses (6R)-5,10-methenyltetrahydrofolate + H2O = (6R)-10-formyltetrahydrofolate + H(+). Its pathway is one-carbon metabolism; tetrahydrofolate interconversion. Its function is as follows. Catalyzes the oxidation of 5,10-methylenetetrahydrofolate to 5,10-methenyltetrahydrofolate and then the hydrolysis of 5,10-methenyltetrahydrofolate to 10-formyltetrahydrofolate. This Thermobifida fusca (strain YX) protein is Bifunctional protein FolD.